The chain runs to 36 residues: SFGSGELVXGEXPXFEKIIVKGIDAEVASAPMQVML.

The Peptidase S1 domain occupies 19-36; the sequence is IVKGIDAEVASAPMQVML.

This sequence belongs to the peptidase S1 family. As to quaternary structure, forms a heterodimer with SERPINA5. Post-translationally, the gamma-carboxyglutamyl residues, which bind calcium ions, result from the carboxylation of glutamyl residues by a microsomal enzyme, the vitamin K-dependent carboxylase. The modified residues are necessary for the calcium-dependent interaction with a negatively charged phospholipid surface, which is essential for the conversion of prothrombin to thrombin. In terms of processing, N-glycosylated. In terms of tissue distribution, expressed by the liver and secreted in plasma.

The protein resides in the secreted. The enzyme catalyses Selective cleavage of Arg-|-Gly bonds in fibrinogen to form fibrin and release fibrinopeptides A and B.. Its activity is regulated as follows. Inhibited by SERPINA5. Thrombin, which cleaves bonds after Arg and Lys, converts fibrinogen to fibrin and activates factors V, VII, VIII, XIII, and, in complex with thrombomodulin, protein C. Functions in blood homeostasis, inflammation and wound healing. The protein is Thrombin of Salmo salar (Atlantic salmon).